The chain runs to 209 residues: Uracil phosphoribosyltransferase (209 aa).

Residues arginine 79, arginine 104, and 131–139 each bind 5-phospho-alpha-D-ribose 1-diphosphate; that span reads DPMLATGGS. Uracil is bound by residues isoleucine 194 and 199–201; that span reads GDA. Aspartate 200 lines the 5-phospho-alpha-D-ribose 1-diphosphate pocket.

Belongs to the UPRTase family. Requires Mg(2+) as cofactor.

The enzyme catalyses UMP + diphosphate = 5-phospho-alpha-D-ribose 1-diphosphate + uracil. Its pathway is pyrimidine metabolism; UMP biosynthesis via salvage pathway; UMP from uracil: step 1/1. Allosterically activated by GTP. Functionally, catalyzes the conversion of uracil and 5-phospho-alpha-D-ribose 1-diphosphate (PRPP) to UMP and diphosphate. The polypeptide is Uracil phosphoribosyltransferase (Lysinibacillus sphaericus (strain C3-41)).